Here is a 138-residue protein sequence, read N- to C-terminus: Acidic phospholipase A2 Cvv-E6h (138 aa).

Residues 1–16 form the signal peptide; sequence MRTLWIVAVLLLGVEG. 7 disulfides stabilise this stretch: cysteine 42–cysteine 131, cysteine 44–cysteine 60, cysteine 59–cysteine 111, cysteine 65–cysteine 138, cysteine 66–cysteine 104, cysteine 73–cysteine 97, and cysteine 91–cysteine 102. Positions 43, 45, and 47 each coordinate Ca(2+). Residue histidine 63 is part of the active site. Residue aspartate 64 participates in Ca(2+) binding. Residue aspartate 105 is part of the active site.

The protein belongs to the phospholipase A2 family. Group II subfamily. D49 sub-subfamily. Ca(2+) is required as a cofactor. In terms of tissue distribution, expressed by the venom gland.

It localises to the secreted. It catalyses the reaction a 1,2-diacyl-sn-glycero-3-phosphocholine + H2O = a 1-acyl-sn-glycero-3-phosphocholine + a fatty acid + H(+). Functionally, snake venom phospholipase A2 (PLA2) that shows very low inhibition of ADP-induced platelet aggregation in platelet-rich plasma of human, rabbit and guinea pig. In vivo, shows efficient edema-inducing activities in rat paws. PLA2 catalyzes the calcium-dependent hydrolysis of the 2-acyl groups in 3-sn-phosphoglycerides. This chain is Acidic phospholipase A2 Cvv-E6h, found in Crotalus viridis viridis (Prairie rattlesnake).